Reading from the N-terminus, the 62-residue chain is Toxin Ct28 (62 aa).

An N-terminal signal peptide occupies residues 1–22; that stretch reads MKAFYGILIILLFCSMFKLNES. 3 cysteine pairs are disulfide-bonded: C29–C51, C35–C56, and C39–C58. At N61 the chain carries Asparagine amide.

The protein belongs to the short scorpion toxin superfamily. Potassium channel inhibitor family. Alpha-KTx 02 subfamily. As to expression, expressed by the venom gland.

The protein resides in the secreted. Blocks voltage-gated potassium channels. The protein is Toxin Ct28 of Centruroides tecomanus (Scorpion).